Consider the following 433-residue polypeptide: Enolase (433 aa).

Glutamine 167 is a binding site for (2R)-2-phosphoglycerate. The active-site Proton donor is glutamate 209. Mg(2+)-binding residues include aspartate 246, glutamate 291, and aspartate 318. 4 residues coordinate (2R)-2-phosphoglycerate: lysine 343, arginine 372, serine 373, and lysine 394. Lysine 343 functions as the Proton acceptor in the catalytic mechanism.

It belongs to the enolase family. In terms of assembly, component of the RNA degradosome, a multiprotein complex involved in RNA processing and mRNA degradation. Mg(2+) is required as a cofactor.

The protein localises to the cytoplasm. It is found in the secreted. The protein resides in the cell surface. The catalysed reaction is (2R)-2-phosphoglycerate = phosphoenolpyruvate + H2O. Its pathway is carbohydrate degradation; glycolysis; pyruvate from D-glyceraldehyde 3-phosphate: step 4/5. In terms of biological role, catalyzes the reversible conversion of 2-phosphoglycerate (2-PG) into phosphoenolpyruvate (PEP). It is essential for the degradation of carbohydrates via glycolysis. This Histophilus somni (strain 129Pt) (Haemophilus somnus) protein is Enolase.